The primary structure comprises 89 residues: Putative membrane protein insertion efficiency factor (89 aa).

Belongs to the UPF0161 family.

It is found in the cell membrane. Its function is as follows. Could be involved in insertion of integral membrane proteins into the membrane. This chain is Putative membrane protein insertion efficiency factor, found in Exiguobacterium sp. (strain ATCC BAA-1283 / AT1b).